The chain runs to 1114 residues: WD repeat-containing protein 72 (1114 aa).

7 WD repeats span residues 15 to 54 (APPH…KISA), 60 to 102 (GHSA…CVEK), 160 to 197 (KCMC…NSIQ), 327 to 373 (EENK…SKFD), 413 to 452 (GMTA…KAGL), 470 to 515 (GHHQ…ILHT), and 566 to 605 (KHLF…LERH). 2 disordered regions span residues 634–658 (SETH…VPCP) and 749–798 (SLQT…PPRK). Positions 780–796 (KRQKKMKSSKKAHPKPP) are enriched in basic residues. A phosphoserine mark is found at Ser-1093 and Ser-1095.

Expressed in maturation stage ameloblasts (at protein level).

It localises to the cytoplasmic vesicle. Its function is as follows. Plays a major role in formation of tooth enamel. Specifically required during the maturation phase of amelogenesis for normal formation of the enamel matrix and clearance of enamel proteins. May be involved in localization of the calcium transporter SLC24A4 to the ameloblast cell membrane. The polypeptide is WD repeat-containing protein 72 (Mus musculus (Mouse)).